Reading from the N-terminus, the 203-residue chain is Ribosome maturation factor RimP (203 aa).

A disordered region spans residues 184–203 (RRGSAPVEDEEGEGEAPTAH).

Belongs to the RimP family.

Its subcellular location is the cytoplasm. Functionally, required for maturation of 30S ribosomal subunits. This chain is Ribosome maturation factor RimP, found in Methylobacterium nodulans (strain LMG 21967 / CNCM I-2342 / ORS 2060).